A 441-amino-acid chain; its full sequence is Phenoloxidase-activating enzyme (441 aa).

The signal sequence occupies residues 1-21 (MFLIWTFIVAVLAIQTKSVVA). Q22 carries the pyrrolidone carboxylic acid modification. Clip domains lie at 23–76 (SCRT…AVCC) and 77–127 (PCNA…SICC). Cystine bridges form between C24–C75, C34–C65, C40–C76, C78–C126, C88–C117, C94–C127, C164–C305, and C203–C219. Residues 174-440 (IVGGAPASID…YLPWIQNTIE (267 aa)) enclose the Peptidase S1 domain. H218 serves as the catalytic Charge relay system. 4 residues coordinate Ca(2+): E237, N239, N242, and D246. N-linked (GlcNAc...) asparagine glycosylation occurs at N239. The active-site Charge relay system is D285. N334 carries N-linked (GlcNAc...) asparagine glycosylation. Intrachain disulfides connect C356-C377 and C387-C416. S391 serves as the catalytic Charge relay system.

It belongs to the peptidase S1 family. CLIP subfamily. As to quaternary structure, in the active form, heterodimer of a light chain and a heavy chain; disulfide-linked. Post-translationally, proteolytically cleaved for activation. Cleavage produces a light chain and a catalytic heavy chain which remains covalently associated probably through an interchain disulfide bond. Glycosylated.

With respect to regulation, stabilized by calcium. Inhibited by di-isopropyl phosphorofluoridate (DFP), phenylmethanesulfonylfluoride (PMSF), p-nitrophenyl-p'-guanidinobenzonate (p-NPGB), p-chloromercuribenzoate (PCMB), ethylenediaminetetraacetic acid (EDTA), urea and CI-13c. Its function is as follows. Endopeptidase with selective post-Arg cleavage site. Activates prophenoloxidase. Has a probable role in the melanization process as part of the innate immune response. This is Phenoloxidase-activating enzyme from Bombyx mori (Silk moth).